The sequence spans 335 residues: Homeobox protein unc-39 (335 aa).

Disordered stretches follow at residues 27 to 56 and 269 to 294; these read FTSS…GGPP and RRQR…NGGS. Residues 28–41 are compositionally biased toward low complexity; that stretch reads TSSSNSNTSNSSTS. A compositionally biased stretch (polar residues) spans 42 to 53; sequence PSHISDQFSSSG. The homeobox DNA-binding region spans 225 to 277; that stretch reads KDSSRKFLKQFFRNVSEYPTQEQKREISRATGLKIVQISNWFKNRRQRDKSNN. The span at 276-294 shows a compositional bias: low complexity; it reads NNSAKCSPPSSSSSTNGGS.

The protein belongs to the SIX/Sine oculis homeobox family.

The protein localises to the nucleus. Its function is as follows. Probable transcription factor required for differentiation and migration of neuronal cells, such as RID and CAN neurons. Specifically, plays a role in the terminal differentiation of RID peptidergic neurons. Also required for CAN neuron axon guidance. In Caenorhabditis elegans, this protein is Homeobox protein unc-39.